A 110-amino-acid polypeptide reads, in one-letter code: Insulin-2 (110 aa).

The N-terminal stretch at 1 to 24 (MALWIRFLPLLALLILWEPRPAQA) is a signal peptide. 3 disulfides stabilise this stretch: cysteine 31/cysteine 96, cysteine 43/cysteine 109, and cysteine 95/cysteine 100. Positions 57–87 (EVEDPQVAQLELGGGPGAGDLQTLALEVARQ) are cleaved as a propeptide — c peptide.

This sequence belongs to the insulin family. Heterodimer of a B chain and an A chain linked by two disulfide bonds.

The protein resides in the secreted. Its function is as follows. Insulin decreases blood glucose concentration. It increases cell permeability to monosaccharides, amino acids and fatty acids. It accelerates glycolysis, the pentose phosphate cycle, and glycogen synthesis in liver. This is Insulin-2 (Ins2) from Rattus norvegicus (Rat).